The following is a 340-amino-acid chain: Mitotic checkpoint protein BUB3.1 (340 aa).

The interval 1-20 (MTTVTPSAGRELSNPPSDGI) is disordered. WD repeat units follow at residues 15-54 (PPSDGISNLRFSNNSDHLLVSSWDKRVRLYDVSTNSLKGE), 96-135 (THDKAVRCVEYSYAAGQVITGSWDKTVKCWDPRGASGPER), 142-179 (LQPERVYSMSLVGHRLVVATAGRHVNIYDLRNMSQPEQ), 239-278 (DIVYPVNSIAFHPIYGTFATGGCDGFVNIWDGNNKKRLYQ), and 281-324 (KYPT…RSVN).

The protein belongs to the WD repeat BUB3 family. Part of the mitotic checkpoint complex (MCC); interacts with CDC20-1 and CDC20-2. Interacts with MAD2 and BUBR1. As to expression, expressed in actively dividing tissues, early in organ development, in young leaves, lateral root primordia and root meristems, flower buds, flowers and siliques.

The protein localises to the nucleus. It is found in the chromosome. It localises to the centromere. Its subcellular location is the kinetochore. The protein resides in the cytoplasm. The protein localises to the cytoskeleton. It is found in the phragmoplast. It localises to the spindle. Its function is as follows. Has a dual function in spindle-assembly checkpoint signaling and in promoting the establishment of correct kinetochore-microtubule (K-MT) attachments. Promotes the formation of stable end-on bipolar attachments. Necessary for kinetochore localization of BUB1. The BUB1/BUB3 complex plays a role in the inhibition of anaphase-promoting complex or cyclosome (APC/C) when spindle-assembly checkpoint is activated and inhibits the ubiquitin ligase activity of APC/C by phosphorylating its activator CDC20. Essential for gametophyte development. The protein is Mitotic checkpoint protein BUB3.1 (BUB3.1) of Arabidopsis thaliana (Mouse-ear cress).